The primary structure comprises 225 residues: Superantigen-like protein 11 (225 aa).

The signal sequence occupies residues 1–30; the sequence is MKLKNIAKASLALGILTTGMITTTAQPVKA. Residues 94–196 are sialyl Lewis X-binding; that stretch reads VDIFVVRENS…RITMKDGGFY (103 aa).

It belongs to the staphylococcal/streptococcal toxin family. In terms of assembly, homodimer (via its C-terminal domain). Interacts with host FCAR and SELPLG (via sialyl Lewis X).

Its subcellular location is the secreted. In terms of biological role, secreted protein that plays a role in the inhibition of host immune system. Targets myeloid cells such as monocytes or granulocytes through binding with sialyllactosamine-containing glycoproteins. Prevents initial rolling of neutrophils toward the site of infection by interacting with host SELPLG. Disrupts neutrophil motility by induction of cell adhesion via interacting with glycans but independently of SELPLG. The protein is Superantigen-like protein 11 of Staphylococcus aureus (strain Newman).